The chain runs to 205 residues: Large ribosomal subunit protein bL25 (205 aa).

Residues 184-205 (QPAGAVSEAAEGGEAAGETPAA) form a disordered region. A compositionally biased stretch (low complexity) spans 186-205 (AGAVSEAAEGGEAAGETPAA).

This sequence belongs to the bacterial ribosomal protein bL25 family. CTC subfamily. Part of the 50S ribosomal subunit; part of the 5S rRNA/L5/L18/L25 subcomplex. Contacts the 5S rRNA. Binds to the 5S rRNA independently of L5 and L18.

In terms of biological role, this is one of the proteins that binds to the 5S RNA in the ribosome where it forms part of the central protuberance. This chain is Large ribosomal subunit protein bL25, found in Cupriavidus necator (strain ATCC 17699 / DSM 428 / KCTC 22496 / NCIMB 10442 / H16 / Stanier 337) (Ralstonia eutropha).